A 240-amino-acid polypeptide reads, in one-letter code: 1-(5-phosphoribosyl)-5-[(5-phosphoribosylamino)methylideneamino] imidazole-4-carboxamide isomerase (240 aa).

Catalysis depends on Asp10, which acts as the Proton acceptor. The active-site Proton donor is the Asp131.

This sequence belongs to the HisA/HisF family.

It is found in the cytoplasm. It carries out the reaction 1-(5-phospho-beta-D-ribosyl)-5-[(5-phospho-beta-D-ribosylamino)methylideneamino]imidazole-4-carboxamide = 5-[(5-phospho-1-deoxy-D-ribulos-1-ylimino)methylamino]-1-(5-phospho-beta-D-ribosyl)imidazole-4-carboxamide. It functions in the pathway amino-acid biosynthesis; L-histidine biosynthesis; L-histidine from 5-phospho-alpha-D-ribose 1-diphosphate: step 4/9. This Shouchella clausii (strain KSM-K16) (Alkalihalobacillus clausii) protein is 1-(5-phosphoribosyl)-5-[(5-phosphoribosylamino)methylideneamino] imidazole-4-carboxamide isomerase.